The chain runs to 98 residues: Large ribosomal subunit protein uL23 (98 aa).

Belongs to the universal ribosomal protein uL23 family. In terms of assembly, part of the 50S ribosomal subunit. Contacts protein L29, and trigger factor when it is bound to the ribosome.

One of the early assembly proteins it binds 23S rRNA. One of the proteins that surrounds the polypeptide exit tunnel on the outside of the ribosome. Forms the main docking site for trigger factor binding to the ribosome. The polypeptide is Large ribosomal subunit protein uL23 (Streptococcus pneumoniae serotype 19F (strain G54)).